Here is a 98-residue protein sequence, read N- to C-terminus: uncharacterized protein (98 aa).

The next 2 helical transmembrane spans lie at 8–28 and 73–93; these read LILK…HYFL and LWFI…SISL.

The protein resides in the membrane. This is an uncharacterized protein from Saccharomyces cerevisiae (strain ATCC 204508 / S288c) (Baker's yeast).